We begin with the raw amino-acid sequence, 183 residues long: Gamma-crystallin N-A (183 aa).

Beta/gamma crystallin 'Greek key' domains lie at 6–46, 47–89, 95–136, and 138–180; these read GKIV…RVES, GAWV…KPIK, YRME…KVYG, and GAWA…RRVV.

This sequence belongs to the beta/gamma-crystallin family. In terms of assembly, monomer.

Its function is as follows. Crystallins are the dominant structural components of the vertebrate eye lens. The polypeptide is Gamma-crystallin N-A (crygna) (Danio rerio (Zebrafish)).